A 695-amino-acid chain; its full sequence is Probable glutamine--tRNA ligase (695 aa).

The 'HIGH' region signature appears at 201–211 (PEPNGILHIGH). ATP-binding positions include 202 to 204 (EPN) and 208 to 214 (HIGHAKA). Positions 234 and 391 each coordinate L-glutamine. ATP is bound by residues T410, 439–440 (RL), and 447–449 (LSK). The short motif at 446 to 450 (VLSKR) is the 'KMSKS' region element.

It belongs to the class-I aminoacyl-tRNA synthetase family.

The enzyme catalyses tRNA(Gln) + L-glutamine + ATP = L-glutaminyl-tRNA(Gln) + AMP + diphosphate. The chain is Probable glutamine--tRNA ligase from Vairimorpha ceranae (strain BRL01) (Microsporidian parasite).